Here is a 123-residue protein sequence, read N- to C-terminus: Small ribosomal subunit protein uS12 (123 aa).

3-methylthioaspartic acid is present on Asp-89.

This sequence belongs to the universal ribosomal protein uS12 family. In terms of assembly, part of the 30S ribosomal subunit. Contacts proteins S8 and S17. May interact with IF1 in the 30S initiation complex.

Its function is as follows. With S4 and S5 plays an important role in translational accuracy. Interacts with and stabilizes bases of the 16S rRNA that are involved in tRNA selection in the A site and with the mRNA backbone. Located at the interface of the 30S and 50S subunits, it traverses the body of the 30S subunit contacting proteins on the other side and probably holding the rRNA structure together. The combined cluster of proteins S8, S12 and S17 appears to hold together the shoulder and platform of the 30S subunit. The chain is Small ribosomal subunit protein uS12 from Gluconacetobacter diazotrophicus (strain ATCC 49037 / DSM 5601 / CCUG 37298 / CIP 103539 / LMG 7603 / PAl5).